The following is a 389-amino-acid chain: Chalcone synthase 1 (389 aa).

Cys-164 is an active-site residue.

Belongs to the thiolase-like superfamily. Chalcone/stilbene synthases family.

It carries out the reaction (E)-4-coumaroyl-CoA + 3 malonyl-CoA + 3 H(+) = 2',4,4',6'-tetrahydroxychalcone + 3 CO2 + 4 CoA. Its pathway is secondary metabolite biosynthesis; flavonoid biosynthesis. Functionally, the primary product of this enzyme is 4,2',4',6'-tetrahydroxychalcone (also termed naringenin-chalcone or chalcone) which can under specific conditions spontaneously isomerize into naringenin. In Solanum lycopersicum (Tomato), this protein is Chalcone synthase 1 (CHS1).